A 134-amino-acid chain; its full sequence is Translation initiation factor 2 subunit beta (134 aa).

It belongs to the eIF-2-beta/eIF-5 family. As to quaternary structure, heterotrimer composed of an alpha, a beta and a gamma chain.

Functionally, eIF-2 functions in the early steps of protein synthesis by forming a ternary complex with GTP and initiator tRNA. The protein is Translation initiation factor 2 subunit beta of Pyrobaculum neutrophilum (strain DSM 2338 / JCM 9278 / NBRC 100436 / V24Sta) (Thermoproteus neutrophilus).